Consider the following 291-residue polypeptide: Lipase (291 aa).

The signal sequence occupies residues 1-17; the sequence is MRSSLVLFFVSAWTALA. The propeptide occupies 18-22; the sequence is SPIRR. Cystine bridges form between C44-C290, C58-C63, and C126-C129. S168 acts as the Nucleophile in catalysis. Residues D223 and H280 each act as charge relay system in the active site.

Belongs to the AB hydrolase superfamily. Lipase family.

The enzyme catalyses a triacylglycerol + H2O = a diacylglycerol + a fatty acid + H(+). This is Lipase (LIP) from Thermomyces lanuginosus (Humicola lanuginosa).